The sequence spans 391 residues: Succinyl-diaminopimelate desuccinylase (391 aa).

A Zn(2+)-binding site is contributed by His-78. The active site involves Asp-80. Asp-111 contacts Zn(2+). Residue Glu-145 is the Proton acceptor of the active site. Residues Glu-146, Glu-174, and His-360 each coordinate Zn(2+).

It belongs to the peptidase M20A family. DapE subfamily. In terms of assembly, homodimer. Zn(2+) serves as cofactor. It depends on Co(2+) as a cofactor.

It carries out the reaction N-succinyl-(2S,6S)-2,6-diaminopimelate + H2O = (2S,6S)-2,6-diaminopimelate + succinate. Its pathway is amino-acid biosynthesis; L-lysine biosynthesis via DAP pathway; LL-2,6-diaminopimelate from (S)-tetrahydrodipicolinate (succinylase route): step 3/3. Catalyzes the hydrolysis of N-succinyl-L,L-diaminopimelic acid (SDAP), forming succinate and LL-2,6-diaminopimelate (DAP), an intermediate involved in the bacterial biosynthesis of lysine and meso-diaminopimelic acid, an essential component of bacterial cell walls. This Acidovorax ebreus (strain TPSY) (Diaphorobacter sp. (strain TPSY)) protein is Succinyl-diaminopimelate desuccinylase.